Consider the following 446-residue polypeptide: GRAM domain-containing protein 2B (446 aa).

The residue at position 1 (methionine 1) is an N-acetylmethionine. Residues 1-120 (MVKKRLPSND…RKKSSSSSQY (120 aa)) form a disordered region. The span at 29–43 (SRSSTDSPSSVFFSS) shows a compositional bias: low complexity. The segment covering 95-113 (DKNDCKTESKNDPKTERKK) has biased composition (basic and acidic residues). The 68-residue stretch at 124–191 (MHFHKLFLSV…FSVTLIKKTK (68 aa)) folds into the GRAM domain. The segment covering 234–247 (TSVGNSPNPSSAEN) has biased composition (polar residues). Residues 234–253 (TSVGNSPNPSSAENSFRADR) form a disordered region. 3 positions are modified to phosphoserine: serine 239, serine 256, and serine 266. The tract at residues 276 to 298 (RQDMEGYSSSGSQTPESENSRDF) is disordered. Residues 282-292 (YSSSGSQTPES) show a composition bias toward polar residues.

The sequence is that of GRAM domain-containing protein 2B (GRAMD2B) from Pongo abelii (Sumatran orangutan).